A 339-amino-acid chain; its full sequence is MNISNKKIILHDMCLRDGMHAKRHQISLAEMTQLATALDDAGVPLIEVTHGDGLGGNSVNYGFAAHSDEEYLSTVIPLMKQAKISALLLPGIGTVDHLRMAHELGVSTIRVAAQCTEADVTEQHISLSRQLGLDTVGFLMMAHMLEPKALLEQAKLMESYGANCIYCTDSAGYMLQDDVFERISVLRDGLKPDTQIGFHGHHNLALGVANSLTAVEAGAERIDGSAAGLGAGAGNTPLEVFNAVATRMGASTDVDVFKLMAAAEEIVVPMMDQAIRVDRDSLVLGYAGVYSSFLLHAKRAAEKYGVPSEAILLKLGQMKTVGGQEDMIEDVAINLAKSR.

Residues 8–260 enclose the Pyruvate carboxyltransferase domain; sequence IILHDMCLRD…STDVDVFKLM (253 aa). 16–17 contacts substrate; the sequence is RD. Mn(2+) is bound at residue D17. The active-site Proton acceptor is the H20. Residues S170 and H199 each coordinate substrate. Positions 199 and 201 each coordinate Mn(2+). Position 290 (Y290) interacts with substrate.

Belongs to the 4-hydroxy-2-oxovalerate aldolase family.

It catalyses the reaction (S)-4-hydroxy-2-oxopentanoate = acetaldehyde + pyruvate. The sequence is that of 4-hydroxy-2-oxovalerate aldolase from Shewanella woodyi (strain ATCC 51908 / MS32).